We begin with the raw amino-acid sequence, 178 residues long: Fatty-acid and retinol-binding protein 1 (178 aa).

The N-terminal stretch at 1–16 (MYHQLILMALIGVIMA) is a signal peptide. Coiled-coil stretches lie at residues 67–89 (DAAL…ELRN) and 122–154 (QKLD…LKAT).

It belongs to the fatty-acid and retinol-binding protein (FARBP) family. Post-translationally, not glycosylated.

It localises to the secreted. Binds retinol and different fatty acids. The protein is Fatty-acid and retinol-binding protein 1 of Litomosoides sigmodontis (Filarial nematode worm).